The primary structure comprises 332 residues: Thiamine thiazole synthase (332 aa).

Substrate-binding positions include cysteine 87, 108-109 (EA), glycine 116, and valine 184. Cysteine 221 carries the 2,3-didehydroalanine (Cys) modification. Substrate-binding positions include aspartate 223, histidine 238, methionine 290, and 300–302 (RMG).

This sequence belongs to the THI4 family. In terms of assembly, homooctamer. Requires Fe cation as cofactor. During the catalytic reaction, a sulfide is transferred from Cys-221 to a reaction intermediate, generating a dehydroalanine residue.

The protein resides in the cytoplasm. It is found in the nucleus. The catalysed reaction is [ADP-thiazole synthase]-L-cysteine + glycine + NAD(+) = [ADP-thiazole synthase]-dehydroalanine + ADP-5-ethyl-4-methylthiazole-2-carboxylate + nicotinamide + 3 H2O + 2 H(+). In terms of biological role, involved in biosynthesis of the thiamine precursor thiazole. Catalyzes the conversion of NAD and glycine to adenosine diphosphate 5-(2-hydroxyethyl)-4-methylthiazole-2-carboxylic acid (ADT), an adenylated thiazole intermediate. The reaction includes an iron-dependent sulfide transfer from a conserved cysteine residue of the protein to a thiazole intermediate. The enzyme can only undergo a single turnover, which suggests it is a suicide enzyme. May have additional roles in adaptation to various stress conditions and in DNA damage tolerance. The chain is Thiamine thiazole synthase from Aspergillus fumigatus (strain ATCC MYA-4609 / CBS 101355 / FGSC A1100 / Af293) (Neosartorya fumigata).